A 160-amino-acid chain; its full sequence is Cytochrome b6-f complex subunit 4 (160 aa).

3 consecutive transmembrane segments (helical) span residues L36 to V56, L95 to E115, and A131 to I151.

This sequence belongs to the cytochrome b family. PetD subfamily. In terms of assembly, the 4 large subunits of the cytochrome b6-f complex are cytochrome b6, subunit IV (17 kDa polypeptide, PetD), cytochrome f and the Rieske protein, while the 4 small subunits are PetG, PetL, PetM and PetN. The complex functions as a dimer.

Its subcellular location is the cellular thylakoid membrane. In terms of biological role, component of the cytochrome b6-f complex, which mediates electron transfer between photosystem II (PSII) and photosystem I (PSI), cyclic electron flow around PSI, and state transitions. The chain is Cytochrome b6-f complex subunit 4 from Crocosphaera subtropica (strain ATCC 51142 / BH68) (Cyanothece sp. (strain ATCC 51142)).